The sequence spans 94 residues: Co-chaperonin GroES (94 aa).

It belongs to the GroES chaperonin family. In terms of assembly, heptamer of 7 subunits arranged in a ring. Interacts with the chaperonin GroEL.

It localises to the cytoplasm. Its function is as follows. Together with the chaperonin GroEL, plays an essential role in assisting protein folding. The GroEL-GroES system forms a nano-cage that allows encapsulation of the non-native substrate proteins and provides a physical environment optimized to promote and accelerate protein folding. GroES binds to the apical surface of the GroEL ring, thereby capping the opening of the GroEL channel. This chain is Co-chaperonin GroES, found in Anoxybacillus flavithermus (strain DSM 21510 / WK1).